Here is a 250-residue protein sequence, read N- to C-terminus: Precorrin-4 C(11)-methyltransferase (250 aa).

Belongs to the precorrin methyltransferase family.

It catalyses the reaction precorrin-4 + S-adenosyl-L-methionine = precorrin-5 + S-adenosyl-L-homocysteine. Its pathway is cofactor biosynthesis; adenosylcobalamin biosynthesis; cob(II)yrinate a,c-diamide from precorrin-2 (aerobic route): step 4/10. Catalyzes the methylation of C-11 in precorrin-4 to form precorrin-5. This chain is Precorrin-4 C(11)-methyltransferase (cobM), found in Pseudomonas aeruginosa (strain ATCC 15692 / DSM 22644 / CIP 104116 / JCM 14847 / LMG 12228 / 1C / PRS 101 / PAO1).